The primary structure comprises 335 residues: NmrA-like family domain-containing oxidoreductase lnbB (335 aa).

Residues 14–18, 41–45, 62–63, 83–85, Lys142, and 166–169 contribute to the NADP(+) site; these read GTGNQ, RHPDS, DG, TNS, and YYEQ.

The protein belongs to the NmrA-type oxidoreductase family.

The protein operates within secondary metabolite biosynthesis. Its function is as follows. NmrA-like family domain-containing oxidoreductase; part of the lnb gene cluster that mediates the biosynthesis of diastereomeric piperazines. Lna and lnb clusters encode sets of enzymes that produce overlapping sets of previously undescribed metabolites such as piperazinomycin-like metabolites or morpholine. The lna and lnb biosynthetic pathways appear to be part of a signaling network that controls the formation of sclerotia, a resilient overwintering structure. One primary function of the non-canonical nonribosomal peptide synthetases lnaA and lnbA consists in the reduction of L-tyrosine. The presence in the clusters of tailoring enzymes such as the oxidoreductases lnaB, lnbB, lnaE or lnbE, as well as of the cytochrome P450 monooxygenases lnaC, lnaD, or lnbC, might explain formation of various diastereomeric piperazines. This is NmrA-like family domain-containing oxidoreductase lnbB from Aspergillus flavus (strain ATCC 200026 / FGSC A1120 / IAM 13836 / NRRL 3357 / JCM 12722 / SRRC 167).